The sequence spans 480 residues: 2-phosphoxylose phosphatase 1 (480 aa).

Over 1 to 6 (MLFRNR) the chain is Cytoplasmic. A helical; Signal-anchor for type II membrane protein membrane pass occupies residues 7-27 (FLLLLALAALLAFVSLSLQFF). The Lumenal segment spans residues 28-480 (HLIPVSTPKN…YYDACHREGF (453 aa)). Histidine 97 acts as the Nucleophile in catalysis. N-linked (GlcNAc...) asparagine glycans are attached at residues asparagine 305 and asparagine 354. Catalysis depends on aspartate 379, which acts as the Proton donor.

It belongs to the histidine acid phosphatase family. In terms of assembly, interacts with B3GAT3; the interaction increases the 2-phosphoxylose phosphatase activity of PXYLP1 during completion of linkage region formation in a B3GAT3-mediated manner. As to expression, widely expressed. Strongly expressed in spleen, fetal liver, moderately in placenta, pancreas, kidney, thymus and colon.

The protein resides in the golgi apparatus membrane. It carries out the reaction 3-O-[beta-D-GlcA-(1-&gt;3)-beta-D-Gal-(1-&gt;3)-beta-D-Gal-(1-&gt;4)-beta-D-2-O-P-Xyl]-L-seryl-[protein] + H2O = 3-O-(beta-D-GlcA-(1-&gt;3)-beta-D-Gal-(1-&gt;3)-beta-D-Gal-(1-&gt;4)-beta-D-Xyl)-L-seryl-[protein] + phosphate. Functionally, responsible for the 2-O-dephosphorylation of xylose in the glycosaminoglycan-protein linkage region of proteoglycans thereby regulating the amount of mature glycosaminoglycan (GAG) chains. Sulfated glycosaminoglycans (GAGs), including heparan sulfate and chondroitin sulfate, are synthesized on the so-called common GAG-protein linkage region (GlcUAbeta1-3Galbeta1-3Galbeta1-4Xylbeta1-O-Ser) of core proteins, which is formed by the stepwise addition of monosaccharide residues by the respective specific glycosyltransferases. Xylose 2-O-dephosphorylation during completion of linkage region formation is a prerequisite for the initiation and efficient elongation of the repeating disaccharide region of GAG chains. The protein is 2-phosphoxylose phosphatase 1 of Homo sapiens (Human).